A 179-amino-acid chain; its full sequence is Laminin-binding fimbrial subunit ElfA (179 aa).

The signal sequence occupies residues 1–21 (MKKSVLTAFITVVCATSSVMA).

The protein belongs to the fimbrial protein family.

Its subcellular location is the fimbrium. Functionally, part of the elfADCG fimbrial operon, which could be required for adherence to host epithelial cells. ElfA is an accessory colonization factor that contributes to adherence of bacteria to human intestinal epithelial cells and to animal intestinal tissue in vitro. Binds specifically to laminin, but not to fibronectin or collagen type IV. The protein is Laminin-binding fimbrial subunit ElfA (elfA) of Escherichia coli O157:H7.